Here is a 493-residue protein sequence, read N- to C-terminus: Leucine-rich repeat-containing protein 14 (493 aa).

One copy of the LRR 1; degenerate repeat lies at 111–146; sequence KHALRVLDMTGLLDDGVEQDPGTMSMWDCTAAVART. The LRR 2; degenerate repeat unit spans residues 194–218; it reads RLCCRDLRAEDLPMRNTVALLQLLD. Residues 219–246 form an LRR 3; degenerate repeat; sequence AGCLRRVDLRFNNLGLRGLSVIIPHVAR. The stretch at 247-282 is one LRR 4; degenerate repeat; that stretch reads FQHLASLRLHYVHGDSRQPSVDGEDNFRYFLAQMGR. LRR repeat units follow at residues 283–307, 308–339, 340–360, 364–391, and 392–416; these read FTCLRELSMGSSLLSGRLDQLLSTL, QSPLESLELAFCALLPEDLRFLARSPHAAHLK, KLDLSGNDLSGSQLAPFQGLL, AATLLHLELTECQLADTQLLATLPILTQ, and CASLRYLGLYGNPLSMAGLKELLRD.

Belongs to the PRAME family. LRRC14 subfamily. In terms of assembly, interacts with IKBKB; disrupts IKBKB-IKBKG interaction preventing I-kappa-B-kinase (IKK) core complex formation and leading to a decrease of IKBKB phosphorylation and NF-kappaB activation. Interacts with CHUK.

It is found in the cytoplasm. Negatively regulates Toll-like receptor-mediated NF-kappa-B signaling by disrupting IKK core complex formation through interaction with IKBKB. The chain is Leucine-rich repeat-containing protein 14 from Homo sapiens (Human).